A 104-amino-acid polypeptide reads, in one-letter code: Class I hydrophobin 12 (104 aa).

A signal peptide spans 1–25; that stretch reads MFSKATLFFTAAVVIVAAGATPTTS. 4 disulfide bridges follow: C27–C85, C34–C79, C35–C67, and C86–C99.

It belongs to the fungal hydrophobin family. Self-assembles to form functional amyloid fibrils called rodlets. Self-assembly into fibrillar rodlets occurs spontaneously at hydrophobic:hydrophilic interfaces and the rodlets further associate laterally to form amphipathic monolayers.

Its subcellular location is the secreted. The protein resides in the cell wall. Its function is as follows. Aerial growth, conidiation, and dispersal of filamentous fungi in the environment rely upon a capability of their secreting small amphipathic proteins called hydrophobins (HPBs) with low sequence identity. Class I can self-assemble into an outermost layer of rodlet bundles on aerial cell surfaces, conferring cellular hydrophobicity that supports fungal growth, development and dispersal; whereas Class II form highly ordered films at water-air interfaces through intermolecular interactions but contribute nothing to the rodlet structure. Hydph12 is a class I hydrophobin involved in the formation of mycelium knots. In Pleurotus ostreatus (strain PC15) (Oyster mushroom), this protein is Class I hydrophobin 12.